We begin with the raw amino-acid sequence, 155 residues long: SsrA-binding protein (155 aa).

This sequence belongs to the SmpB family.

It localises to the cytoplasm. In terms of biological role, required for rescue of stalled ribosomes mediated by trans-translation. Binds to transfer-messenger RNA (tmRNA), required for stable association of tmRNA with ribosomes. tmRNA and SmpB together mimic tRNA shape, replacing the anticodon stem-loop with SmpB. tmRNA is encoded by the ssrA gene; the 2 termini fold to resemble tRNA(Ala) and it encodes a 'tag peptide', a short internal open reading frame. During trans-translation Ala-aminoacylated tmRNA acts like a tRNA, entering the A-site of stalled ribosomes, displacing the stalled mRNA. The ribosome then switches to translate the ORF on the tmRNA; the nascent peptide is terminated with the 'tag peptide' encoded by the tmRNA and targeted for degradation. The ribosome is freed to recommence translation, which seems to be the essential function of trans-translation. This is SsrA-binding protein from Geobacillus sp. (strain WCH70).